The following is a 50-amino-acid chain: Sperm protamine P1 (50 aa).

Disulfide bonds link Cys7/Cys15 and Cys39/Cys47.

Belongs to the protamine P1 family. Cross-linked by interchain disulfide bonds around the DNA-helix. Testis.

It is found in the nucleus. The protein localises to the chromosome. Its function is as follows. Protamines substitute for histones in the chromatin of sperm during the haploid phase of spermatogenesis. They compact sperm DNA into a highly condensed, stable and inactive complex. In Oryctolagus cuniculus (Rabbit), this protein is Sperm protamine P1 (PRM1).